The sequence spans 148 residues: uncharacterized protein (148 aa).

The 62-residue stretch at 4 to 65 folds into the HTH asnC-type domain; that stretch reads MDKVDLQLIK…IPNLEKLNYM (62 aa). A DNA-binding region (H-T-H motif) is located at residues 23-42; sequence YRELAEMLGTTRQRVARKVD.

This is an uncharacterized protein from Pyrococcus furiosus (strain ATCC 43587 / DSM 3638 / JCM 8422 / Vc1).